Here is a 183-residue protein sequence, read N- to C-terminus: V-type ATP synthase subunit E (183 aa).

The protein belongs to the V-ATPase E subunit family.

Produces ATP from ADP in the presence of a proton gradient across the membrane. This Fusobacterium nucleatum subsp. nucleatum (strain ATCC 25586 / DSM 15643 / BCRC 10681 / CIP 101130 / JCM 8532 / KCTC 2640 / LMG 13131 / VPI 4355) protein is V-type ATP synthase subunit E.